The following is a 67-amino-acid chain: Alpha-conotoxin-like Qc1.1b (67 aa).

The N-terminal stretch at 1-21 (MGMRMMFTMFLLVVLAITVVS) is a signal peptide. A propeptide spanning residues 22–46 (FTSDHASDGRNTAANDKASKLMALR) is cleaved from the precursor. Cystine bridges form between Cys-49/Cys-55 and Cys-50/Cys-63. The segment at 51-53 (DNP) is lacks the Ser-Xaa-Pro motif that is crucial for potent interaction with nAChR.

This sequence belongs to the conotoxin A superfamily. Expressed by the venom duct.

Its subcellular location is the secreted. Functionally, alpha-conotoxins act on postsynaptic membranes, they bind to the nicotinic acetylcholine receptors (nAChR) and thus inhibit them. Has possibly a distinct nAChR binding mode from other alpha-conotoxins, due to a different three residue motif (lacks the Ser-Xaa-Pro motif). In Conus quercinus (Oak cone), this protein is Alpha-conotoxin-like Qc1.1b.